A 477-amino-acid chain; its full sequence is MQVLHVCSEMFPLLKTGGLADVIGALPAAQIADGVDARVLLPAFPDIRRGVTDAQVVSRRDTFAGHITLLFGHYNGVGIYLIDAPHLYDRPGSPYHDTNLFAYTDNVLRFALLGWVGAEMASGLDPFWRPDVVHAHDWHAGLAPAYLAARGRPAKSVFTVHNLAYQGMFYAHHMNDIQLPWSFFNIHGLEFNGQISFLKAGLYYADHITAVSPTYAREITEPQFAYGMEGLLQQRHREGRLSGVLNGVDEKIWSPETDLLLASRYTRDTLEDKAENKRQLQIAMGLKVDDKVPLFAVVSRLTSQKGLDLVLEALPGLLEQGGQLALLGAGDPVLQEGFLAAAAEYPGQVGVQIGYHEAFSHRIMGGADVILVPSRFEPCGLTQLYGLKYGTLPLVRRTGGLADTVSDCSLENLADGVASGFVFEDSNAWSLLRAIRRAFVLWSRASLWRFVQRQAMAMDFSWQVAAKSYRELYYRLK.

Lys-15 lines the ADP-alpha-D-glucose pocket.

The protein belongs to the glycosyltransferase 1 family. Bacterial/plant glycogen synthase subfamily.

It catalyses the reaction [(1-&gt;4)-alpha-D-glucosyl](n) + ADP-alpha-D-glucose = [(1-&gt;4)-alpha-D-glucosyl](n+1) + ADP + H(+). The protein operates within glycan biosynthesis; glycogen biosynthesis. Its function is as follows. Synthesizes alpha-1,4-glucan chains using ADP-glucose. In Shigella boydii serotype 4 (strain Sb227), this protein is Glycogen synthase.